A 181-amino-acid chain; its full sequence is Resolvase/recombinase (181 aa).

Residues 2-137 form the Resolvase/invertase-type recombinase catalytic domain; sequence RLFGYARVST…EGRLEAKAKG (136 aa). Ser10 (O-(5'-phospho-DNA)-serine intermediate) is an active-site residue. The H-T-H motif DNA-binding region spans 161–180; it reads AMEIAKRLKIGRSTVYKVLA.

This sequence belongs to the site-specific recombinase resolvase family.

Site-specific recombination protein. This chain is Resolvase/recombinase, found in Pseudomonas putida (Arthrobacter siderocapsulatus).